We begin with the raw amino-acid sequence, 73 residues long: Translational regulator CsrA (73 aa).

Belongs to the CsrA/RsmA family. In terms of assembly, homodimer; the beta-strands of each monomer intercalate to form a hydrophobic core, while the alpha-helices form wings that extend away from the core.

Its subcellular location is the cytoplasm. Functionally, a translational regulator that binds mRNA to regulate translation initiation and/or mRNA stability. Usually binds in the 5'-UTR at or near the Shine-Dalgarno sequence preventing ribosome-binding, thus repressing translation. Its main target seems to be the major flagellin gene, while its function is anatagonized by FliW. This Lachnospira eligens (strain ATCC 27750 / DSM 3376 / VPI C15-48 / C15-B4) (Eubacterium eligens) protein is Translational regulator CsrA.